Here is a 295-residue protein sequence, read N- to C-terminus: Tyrosine recombinase XerD (295 aa).

The Core-binding (CB) domain maps to 1–85 (METIIEEYLR…TIRSFHQFAI (85 aa)). One can recognise a Tyr recombinase domain in the interval 106–289 (KLPDVLNVDE…SKSQIRKMYN (184 aa)). Residues R146, K170, H241, R244, and H267 contribute to the active site. Y276 (O-(3'-phospho-DNA)-tyrosine intermediate) is an active-site residue.

This sequence belongs to the 'phage' integrase family. XerD subfamily. Forms a cyclic heterotetrameric complex composed of two molecules of XerC and two molecules of XerD.

It localises to the cytoplasm. Its function is as follows. Site-specific tyrosine recombinase, which acts by catalyzing the cutting and rejoining of the recombining DNA molecules. The XerC-XerD complex is essential to convert dimers of the bacterial chromosome into monomers to permit their segregation at cell division. It also contributes to the segregational stability of plasmids. The protein is Tyrosine recombinase XerD of Staphylococcus aureus (strain COL).